We begin with the raw amino-acid sequence, 521 residues long: GMP synthase [glutamine-hydrolyzing] (521 aa).

Residues 5–197 (KILILDFGSQ…VLDICGAQPG (193 aa)) enclose the Glutamine amidotransferase type-1 domain. Catalysis depends on Cys-81, which acts as the Nucleophile. Active-site residues include His-171 and Glu-173. The GMPS ATP-PPase domain maps to 198-390 (WTMPNYIEEA…LGLPREMVYR (193 aa)). 225–231 (SGGVDSS) contributes to the ATP binding site.

Homodimer.

It catalyses the reaction XMP + L-glutamine + ATP + H2O = GMP + L-glutamate + AMP + diphosphate + 2 H(+). It participates in purine metabolism; GMP biosynthesis; GMP from XMP (L-Gln route): step 1/1. Its function is as follows. Catalyzes the synthesis of GMP from XMP. The chain is GMP synthase [glutamine-hydrolyzing] (guaA) from Neisseria meningitidis serogroup A / serotype 4A (strain DSM 15465 / Z2491).